The following is a 536-amino-acid chain: Mitogen-activated protein kinase kinase kinase mom-4 (536 aa).

Positions 1 to 20 (MDNSSQSKPSSSSSSHSPSP) are enriched in low complexity. The segment at 1–34 (MDNSSQSKPSSSSSSHSPSPAAITPTQRTTRDSG) is disordered. A Protein kinase domain is found at 51–305 (NLNSHYLGKG…SSECVEYFTL (255 aa)). ATP contacts are provided by residues 57-65 (LGKGTYGLV) and Lys-84. Asp-176 functions as the Proton acceptor in the catalytic mechanism. A disordered region spans residues 314–438 (SVPLSDSSTN…EHRRDSNDEE (125 aa)). Polar residues-rich tracts occupy residues 315–325 (VPLSDSSTNGP) and 350–366 (NNRTPTASKLLNPQQPG). The segment covering 405-438 (KNFRDRAKSEQRQPHRDARPPPPFEHRRDSNDEE) has biased composition (basic and acidic residues).

Belongs to the protein kinase superfamily. STE Ser/Thr protein kinase family. MAP kinase kinase kinase subfamily. As to quaternary structure, interacts with, and is activated by, tap-1. The cofactor is Mg(2+). May be autophosphorylated.

The catalysed reaction is L-seryl-[protein] + ATP = O-phospho-L-seryl-[protein] + ADP + H(+). It carries out the reaction L-threonyl-[protein] + ATP = O-phospho-L-threonyl-[protein] + ADP + H(+). Part of the Wnt signaling pathway essential for the specification of the mesodermal cell fate in early embryos. Stimulates the wrm-1/lit-1-dependent phosphorylation of pop-1 and plays a role in the initial nuclear accumulation of wrm-1. This Caenorhabditis elegans protein is Mitogen-activated protein kinase kinase kinase mom-4.